A 239-amino-acid polypeptide reads, in one-letter code: Superoxide dismutase [Mn] 3 (239 aa).

Residues 1 to 19 show a composition bias toward polar residues; it reads ASTQQTPAQSPTASPTVST. Residues 1-20 form a disordered region; it reads ASTQQTPAQSPTASPTVSTP. Residues 1-30 form the signal peptide; the sequence is ASTQQTPAQSPTASPTVSTPVAYVDRPLTA. His-57, His-112, Asp-195, and His-199 together coordinate Mn(2+).

It belongs to the iron/manganese superoxide dismutase family. In terms of assembly, homodimer. The cofactor is Mn(2+).

It carries out the reaction 2 superoxide + 2 H(+) = H2O2 + O2. Its function is as follows. Destroys superoxide anion radicals which are normally produced within the cells and which are toxic to biological systems. The polypeptide is Superoxide dismutase [Mn] 3 (sodA3) (Leptolyngbya boryana (Plectonema boryanum)).